Reading from the N-terminus, the 2049-residue chain is MATVPVSVHDLIRHHAEAHPEALAISKNEDQITYGELYAASTRIAQLLADQGVEKGDVVPLLGSRCLEMIACTLAIFMIGATLVPMEAGSWSEARIQTVLDALEYKTLLVTADGDVRRRKTIDYHEIQRAMTGGNGWDCGNAKVPINGPESVRDVAYIIFTSGTTGNPKGVKVTHQSLLNYVWPAHANAPFNLGVGPSDTSLLLFSVAFDAFYGVLLSTLCNGGHVLLSEPSTFIDDAKKCTLLPATPTLLGTISDVSPYSNVRGIFLGGETPTPDVVRKWWTPSRSMWNAYGPTETTVSVTMAELRPDVPIVLGEPIRNSKIIILDSNLEEATQGEICVLGSTVLALGYYKNQAQTDDKFVLWNNERIYRTGDMAKWTENGLKFLGRKDQLIKNRGFLINLEADVIPAILSQNNVETATVLMHRQRLIAFVTPLTVNGDLVRQEMARRFDQFLVPDEIQSRDQLPQTINGKVDNRALYDELVQRDTVGVASNAPIATADTKLSALMNTMSEALTIPAQMIRPELSFTDVGGNSLLAIKMLSALRQKGLSLSMSSLFLLPTISEISNHIIEFDASVSHDDDDQQAADLAGCGKSLSLPGATRSAREITMTDVQRGMIRSTLHDAPTGYMLITISLHQNARDIHPSRLSNAVSQVLGRHDIFCSSFDLVRGTISVNDRYQHDWETRALDGSPMSQAIADESELLNQRARMSDTSNEFFRPVNAFRLLLGENSESVLLWLVHHALVDGWSVGKLLNDFRAQLLTEHSQAAQQSQFSQYTAALTPHLEKVHEPAELFWRESMAGLLDGTELKVGRLEDGASNGSRIEHECLSLGLSLEQTEIAARALGFSPAVIFHAAWALLLSSYASEDAVVFGSVFSARSFHVPRIEEIVGPLINLCPFPVQVHALGSKMDLLSSVQSLLLQISEYQWSASKILQDIASGSHARIFSTALFLEYDLPLYASSDQHELAAWTYDRKDWPEFGLTLQVQCVGEHLGFRAVIKDPKYESPLASRLLGHFRNLCLFLLSPKISTLAEANDSMLEPTEMLCLTRTSTSLFTPYSGPPTLKQAFEIGVAAWPMSVALESLSGKLLYQELDDITNALACSIRGLIRPRDVVALLSDGSQNWLLGVISIIKAGATYLPLDTKLPAQRMEAMMETSGACLCVYPNASSLAAFSDLSKPRYLVYEHAAVKTMNGSSSDRLEDIVGPDDYAYIMFTSGSTGTPKGIRVTHRATTSHLSFEPARLHARPGRRHAQVFSPGFDVNIAEIFGTLCYGATLVLKDPADPFAHLSRVDAAMITPSFLSVLSPTELQNLDSIYLIGEAVSQSLADRWSPGRVLYNFYGPCECTIAVAYTRLEIGRPVTLGKTIPRVGCYILDRLLRPVPMGVIGEICLYGVQTMEGYIGQNADEVTKRAFVQDPFRRPGERMYRTGDLAFWTENMEMRYVGRADHQVKVRGYRIELEEIENVIRRSDENVSQSVAIVHQDTIYAFATPQGARIDQIQQCLRQHLPSYAVPQLIIALEAFPTTPNQKLDRKALINLLAPVCSRENETTDHTELVVSQVWREVIGLDEEIALSIDDDFLAIGGNSLRQIAAAQKICSKLGCRVPLSLFITSRSIRSLAASVKKHLAQQSLASTTSVSLAEFSNQCQFLSSKLSYLEKEFLRMHKQASNPSSFNVVHRVRLQGDVDSLLLERALRTVVSKHDILRASYVEVDGVPQRVIQTNTIQIDRIECSDDVAKLHDYISTKFELSGVLIRIALVERCGATDVVLVQHHIITDQVSVQIFLTNLSMEYRALACRDESGQTICTSDHSTNDYHVWALWRDSQLEQPPENTHCEFWRSQFGEKTESIRLVQHQKHPAGEFHSVPRRLKRNSSSGSIEVYLAAAALALQKVSRLNTIRLGVPFLDRLEPGTENMMGVFLDALPVCVQIEPHTDLPSLLSTIRTTLTSALAHAIPSFMIKDIVGLDSIFEVMIVYNRFEDRVTRNMSIPGVSISVEAMRAQGAKFPLLIEFNEHVDHVTLEIEYSEDVLTPSSLSRFEQEICNLLDPQIVV.

The interval 13 to 395 (RHHAEAHPEA…LGRKDQLIKN (383 aa)) is adenylation 1. Positions 497–573 (ATADTKLSAL…EISNHIIEFD (77 aa)) constitute a Carrier 1 domain. Ser-534 bears the O-(pantetheine 4'-phosphoryl)serine mark. The tract at residues 605 to 913 (REITMTDVQR…ALGSKMDLLS (309 aa)) is condensation 1. The interval 1071 to 1452 (VAAWPMSVAL…GRADHQVKVR (382 aa)) is adenylation 2. Residues 1550–1625 (DHTELVVSQV…SLAASVKKHL (76 aa)) enclose the Carrier 2 domain. The residue at position 1585 (Ser-1585) is an O-(pantetheine 4'-phosphoryl)serine. A condensation 2 region spans residues 1662–2044 (MHKQASNPSS…FEQEICNLLD (383 aa)).

It belongs to the NRP synthetase family.

It functions in the pathway secondary metabolite biosynthesis. Nonribosomal peptide synthetase; part of the gene cluster that mediates the biosynthesis of an unusual class of epipolythiodioxopiperazines (ETPs) lacking the reactive thiol group important for toxicity. Firstly, L-tyrosine is prenylated by tcpD, before undergoing condensation with L-glycine in a reaction catalyzed by the NRPS tcpP leading to the diketopiperazine (DKP) backbone. Afterwards the alpha-carbon of tyrosine is oxidized by the cytochrome P450 tcpC to form a hydroxyl group. However, in contrast other ETP biosynthesis pathways studied so far, tcpC is not able to bishydroxylate the DKP at both alpha-carbon positions, but hydroxylates the alpha-carbon of the tyrosine part and the nitrogen of the glycine part. The next steps involve an alpha,beta-elimination reaction catalyzed by tcpI, a methylation by the methyltransferase tcpN the action of the four enzyme cascade tcpG/K/J/I. Due to a dysfunctional cytochrome P450 monooxygenase tcpC, the pathway leads to the biosynthesis of probable non-toxic metabolites lacking the reactive thiol group. The sequence is that of Nonribosomal peptide synthetase tcpP from Claviceps purpurea (strain 20.1) (Ergot fungus).